The primary structure comprises 367 residues: MKIDGTPYRSIWVDDADRWSVRIIDQTKLPWAIEIPRLTTPEQIAHAISAMLVRGAPLIGATAAYGVALAMRADPSDEALETVVPMLAATRPTAINLRWALMRMQRALSAHPPAERADAAYAEAAAICDEDVATNRAIGEHGLGLIRARAQGRRRVNILTHCNAGWIATVDWGTALAPIYMAHDAGIDVHVLVDETRPRNQGFSLTAWELGKHGVPHTVIVDNAGGHFMQRGEVDMVIVGTDRVTRAGDVANKIGTYLKALAARDNGVPFYVALPSSTIDWTIADGLGSIPIEERAPAEVTTITGRALDGSMLTVRIVPKDSTAANPAFDVTPARLVSGLITERGICAANERALAAMFPDQALQTAA.

Substrate contacts are provided by residues 54 to 56 (RGA), Arg91, and Gln201. The active-site Proton donor is the Asp242. 252–253 (NK) lines the substrate pocket.

The protein belongs to the eIF-2B alpha/beta/delta subunits family. MtnA subfamily.

The catalysed reaction is 5-(methylsulfanyl)-alpha-D-ribose 1-phosphate = 5-(methylsulfanyl)-D-ribulose 1-phosphate. Its pathway is amino-acid biosynthesis; L-methionine biosynthesis via salvage pathway; L-methionine from S-methyl-5-thio-alpha-D-ribose 1-phosphate: step 1/6. Catalyzes the interconversion of methylthioribose-1-phosphate (MTR-1-P) into methylthioribulose-1-phosphate (MTRu-1-P). The polypeptide is Methylthioribose-1-phosphate isomerase (Acidiphilium cryptum (strain JF-5)).